The chain runs to 117 residues: Ribonuclease P protein component (117 aa).

Belongs to the RnpA family. In terms of assembly, consists of a catalytic RNA component (M1 or rnpB) and a protein subunit.

It catalyses the reaction Endonucleolytic cleavage of RNA, removing 5'-extranucleotides from tRNA precursor.. Its function is as follows. RNaseP catalyzes the removal of the 5'-leader sequence from pre-tRNA to produce the mature 5'-terminus. It can also cleave other RNA substrates such as 4.5S RNA. The protein component plays an auxiliary but essential role in vivo by binding to the 5'-leader sequence and broadening the substrate specificity of the ribozyme. The sequence is that of Ribonuclease P protein component from Thermotoga petrophila (strain ATCC BAA-488 / DSM 13995 / JCM 10881 / RKU-1).